The chain runs to 296 residues: Heme oxygenase 1 (296 aa).

Topologically, residues 1 to 273 (METSQPHNAE…RMQADMLTTS (273 aa)) are cytoplasmic. Heme b is bound by residues K21, H28, Y137, and R186. Residues 231–264 (GHAVQPKAELRTRSVNKSHENSPAAGKESERTSR) are disordered. Residues 238-250 (AELRTRSVNKSHE) are compositionally biased toward basic and acidic residues. The helical; Anchor for type IV membrane protein transmembrane segment at 274–296 (PLVRWLLALGFIATTVAVGLFAM) threads the bilayer.

Belongs to the heme oxygenase family. In terms of assembly, homodimer and higher order homooligomer. Oligomerization is crucial for its stability and function in the endoplasmic reticulum. In terms of processing, a soluble form arises by proteolytic removal of the membrane anchor.

The protein resides in the endoplasmic reticulum membrane. It carries out the reaction heme b + 3 reduced [NADPH--hemoprotein reductase] + 3 O2 = biliverdin IXalpha + CO + Fe(2+) + 3 oxidized [NADPH--hemoprotein reductase] + 3 H2O + H(+). Inhibited by metalloporphyrins in the following order of decreasing potency: tin mesoporphyrin &gt; tin protoporphyrin &gt; zinc protoporphyrin &gt; manganese protoporphyrin &gt; cobalt protoporphyrin. Catalyzes the oxidative cleavage of heme at the alpha-methene bridge carbon, released as carbon monoxide (CO), to generate biliverdin IXalpha, while releasing the central heme iron chelate as ferrous iron. Affords protection against programmed cell death and this cytoprotective effect relies on its ability to catabolize free heme and prevent it from sensitizing cells to undergo apoptosis. Its function is as follows. Catalyzes the oxidative cleavage of heme at the alpha-methene bridge carbon, released as carbon monoxide (CO), to generate biliverdin IXalpha, while releasing the central heme iron chelate as ferrous iron. The sequence is that of Heme oxygenase 1 (HMOX1) from Gallus gallus (Chicken).